Here is a 471-residue protein sequence, read N- to C-terminus: Cell division protein FtsP (471 aa).

The segment at residues 1-27 (MSLNRRQFIQASGLALCAGMTPLAAKA) is a signal peptide (tat-type signal). Residues 229–287 (VRLRLLNASNSRRYVMRLSDGRAMNVIASDQGLLPAPMAVNQLSLAPGERREILIDMSQ) form the Plastocyanin-like domain.

This sequence belongs to the FtsP family. In terms of processing, predicted to be exported by the Tat system. The position of the signal peptide cleavage has not been experimentally proven.

Its subcellular location is the periplasm. Its function is as follows. Cell division protein that is required for growth during stress conditions. May be involved in protecting or stabilizing the divisomal assembly under conditions of stress. This chain is Cell division protein FtsP, found in Pectobacterium atrosepticum (strain SCRI 1043 / ATCC BAA-672) (Erwinia carotovora subsp. atroseptica).